Here is a 377-residue protein sequence, read N- to C-terminus: MADERQAALDKALKKIEKDFGKGSIMRLGDNSNLEVETVPSGSLALDVALGVGGYPRGRIVEIYGPESSGKTTVALHAVAEVQKRGGTAAYIDAENALDPAYATALGVNIDDLLLSQPDTGEQGLQIADALISSGAIDIVVVDSVAALVPRAEIEGEMGDAHVGLQARLMSQALRKLSGTINKTKTIALFINQIREKVGVMFGNPETTPGGRALKFYATVRLEVRRAEQIKDGTDVIGNRTRIKVVKNKVAPPFKRAEVDIMYGQGISQTGELLDMAVEKDIVDKSGSWYSYGEDRIGQGRENAKQYLADHPDMMAEVNQRVRAAYGVGDEEAAATKATETKTDAPKDKDKGKTKAKDKPADVTPGQIELAPDKSAK.

65-72 (GPESSGKT) serves as a coordination point for ATP. Residues 329 to 377 (GDEEAAATKATETKTDAPKDKDKGKTKAKDKPADVTPGQIELAPDKSAK) are disordered. Residues 339 to 361 (TETKTDAPKDKDKGKTKAKDKPA) show a composition bias toward basic and acidic residues.

It belongs to the RecA family.

It localises to the cytoplasm. Can catalyze the hydrolysis of ATP in the presence of single-stranded DNA, the ATP-dependent uptake of single-stranded DNA by duplex DNA, and the ATP-dependent hybridization of homologous single-stranded DNAs. It interacts with LexA causing its activation and leading to its autocatalytic cleavage. This chain is Protein RecA, found in Levilactobacillus brevis (strain ATCC 367 / BCRC 12310 / CIP 105137 / JCM 1170 / LMG 11437 / NCIMB 947 / NCTC 947) (Lactobacillus brevis).